A 281-amino-acid chain; its full sequence is ATP phosphoribosyltransferase (281 aa).

The protein belongs to the ATP phosphoribosyltransferase family. Long subfamily. It depends on Mg(2+) as a cofactor.

Its subcellular location is the cytoplasm. The enzyme catalyses 1-(5-phospho-beta-D-ribosyl)-ATP + diphosphate = 5-phospho-alpha-D-ribose 1-diphosphate + ATP. The protein operates within amino-acid biosynthesis; L-histidine biosynthesis; L-histidine from 5-phospho-alpha-D-ribose 1-diphosphate: step 1/9. Its activity is regulated as follows. Feedback inhibited by histidine. In terms of biological role, catalyzes the condensation of ATP and 5-phosphoribose 1-diphosphate to form N'-(5'-phosphoribosyl)-ATP (PR-ATP). Has a crucial role in the pathway because the rate of histidine biosynthesis seems to be controlled primarily by regulation of HisG enzymatic activity. The protein is ATP phosphoribosyltransferase of Corynebacterium diphtheriae (strain ATCC 700971 / NCTC 13129 / Biotype gravis).